The following is a 485-amino-acid chain: Aspartyl/glutamyl-tRNA(Asn/Gln) amidotransferase subunit B (485 aa).

Belongs to the GatB/GatE family. GatB subfamily. As to quaternary structure, heterotrimer of A, B and C subunits.

The enzyme catalyses L-glutamyl-tRNA(Gln) + L-glutamine + ATP + H2O = L-glutaminyl-tRNA(Gln) + L-glutamate + ADP + phosphate + H(+). It catalyses the reaction L-aspartyl-tRNA(Asn) + L-glutamine + ATP + H2O = L-asparaginyl-tRNA(Asn) + L-glutamate + ADP + phosphate + 2 H(+). In terms of biological role, allows the formation of correctly charged Asn-tRNA(Asn) or Gln-tRNA(Gln) through the transamidation of misacylated Asp-tRNA(Asn) or Glu-tRNA(Gln) in organisms which lack either or both of asparaginyl-tRNA or glutaminyl-tRNA synthetases. The reaction takes place in the presence of glutamine and ATP through an activated phospho-Asp-tRNA(Asn) or phospho-Glu-tRNA(Gln). This chain is Aspartyl/glutamyl-tRNA(Asn/Gln) amidotransferase subunit B, found in Bordetella avium (strain 197N).